Reading from the N-terminus, the 308-residue chain is Ribosomal RNA small subunit methyltransferase H (308 aa).

Residues 32-34 (GGH), D51, F78, D99, and Q106 each bind S-adenosyl-L-methionine.

The protein belongs to the methyltransferase superfamily. RsmH family.

Its subcellular location is the cytoplasm. The catalysed reaction is cytidine(1402) in 16S rRNA + S-adenosyl-L-methionine = N(4)-methylcytidine(1402) in 16S rRNA + S-adenosyl-L-homocysteine + H(+). In terms of biological role, specifically methylates the N4 position of cytidine in position 1402 (C1402) of 16S rRNA. The protein is Ribosomal RNA small subunit methyltransferase H of Campylobacter curvus (strain 525.92).